Reading from the N-terminus, the 216-residue chain is CASP-like protein 2U1 (216 aa).

The tract at residues 1 to 30 (MKQDTEMGEATNGYIGTPGTVPVSHAGNDS) is disordered. Residues 1 to 37 (MKQDTEMGEATNGYIGTPGTVPVSHAGNDSGMRRMRT) lie on the Cytoplasmic side of the membrane. A helical membrane pass occupies residues 38 to 58 (ASILMRLTAMALCVTALVTMV). Over 59 to 86 (TDKQTHYFNFASTTIVKTAEYTNVLALK) the chain is Extracellular. The helical transmembrane segment at 87–107 (VFVYTNGVIAGYSLLQALWTI) threads the bilayer. Over 108–128 (VAKSSYSTSKARLWTTFFLDQ) the chain is Cytoplasmic. A helical transmembrane segment spans residues 129 to 148 (FIVYVLIGVTGAATEVAYIA). At 149 to 170 (EKGESDVAWPKQCNNFGRFCSQ) the chain is on the extracellular side. A helical transmembrane segment spans residues 171–191 (VGASVIVCFVAILTLVFLAVL). Residues 192 to 216 (SAKQLFIHERPSRTTRKDGYYTSNQ) are Cytoplasmic-facing.

This sequence belongs to the Casparian strip membrane proteins (CASP) family. Homodimer and heterodimers.

It localises to the cell membrane. The protein is CASP-like protein 2U1 of Marchantia polymorpha (Common liverwort).